The sequence spans 338 residues: Lipoate-protein ligase A (338 aa).

The region spanning 29–216 (PATQRVLFLW…AFFAHYGERV (188 aa)) is the BPL/LPL catalytic domain. ATP-binding positions include R71, 76–79 (GAVF), and K134. K134 provides a ligand contact to (R)-lipoate.

The protein belongs to the LplA family. In terms of assembly, monomer.

It localises to the cytoplasm. It carries out the reaction L-lysyl-[lipoyl-carrier protein] + (R)-lipoate + ATP = N(6)-[(R)-lipoyl]-L-lysyl-[lipoyl-carrier protein] + AMP + diphosphate + H(+). It functions in the pathway protein modification; protein lipoylation via exogenous pathway; protein N(6)-(lipoyl)lysine from lipoate: step 1/2. Its pathway is protein modification; protein lipoylation via exogenous pathway; protein N(6)-(lipoyl)lysine from lipoate: step 2/2. Functionally, catalyzes both the ATP-dependent activation of exogenously supplied lipoate to lipoyl-AMP and the transfer of the activated lipoyl onto the lipoyl domains of lipoate-dependent enzymes. In Escherichia coli O139:H28 (strain E24377A / ETEC), this protein is Lipoate-protein ligase A.